Consider the following 309-residue polypeptide: tRNA pseudouridine synthase B (309 aa).

Aspartate 39 functions as the Nucleophile in the catalytic mechanism. The PUA domain maps to 229-306; sequence LPRVVVHQES…ERVLTLRKVF (78 aa).

This sequence belongs to the pseudouridine synthase TruB family. Type 1 subfamily.

It carries out the reaction uridine(55) in tRNA = pseudouridine(55) in tRNA. Functionally, responsible for synthesis of pseudouridine from uracil-55 in the psi GC loop of transfer RNAs. The protein is tRNA pseudouridine synthase B of Thermotoga maritima (strain ATCC 43589 / DSM 3109 / JCM 10099 / NBRC 100826 / MSB8).